A 190-amino-acid polypeptide reads, in one-letter code: Small ribosomal subunit protein uS4c (190 aa).

Residues 92 to 152 (RLDHVVYRAG…KSPSSAQLPP (61 aa)) enclose the S4 RNA-binding domain.

The protein belongs to the universal ribosomal protein uS4 family. In terms of assembly, part of the 30S ribosomal subunit. Contacts protein S5. The interaction surface between S4 and S5 is involved in control of translational fidelity.

It is found in the plastid. Its subcellular location is the chloroplast. Its function is as follows. One of the primary rRNA binding proteins, it binds directly to 16S rRNA where it nucleates assembly of the body of the 30S subunit. Functionally, with S5 and S12 plays an important role in translational accuracy. The protein is Small ribosomal subunit protein uS4c (rps4) of Cyanidioschyzon merolae (strain NIES-3377 / 10D) (Unicellular red alga).